Reading from the N-terminus, the 122-residue chain is Large ribosomal subunit protein uL14 (122 aa).

Belongs to the universal ribosomal protein uL14 family. As to quaternary structure, part of the 50S ribosomal subunit. Forms a cluster with proteins L3 and L19. In the 70S ribosome, L14 and L19 interact and together make contacts with the 16S rRNA in bridges B5 and B8.

In terms of biological role, binds to 23S rRNA. Forms part of two intersubunit bridges in the 70S ribosome. In Thermosipho africanus (strain TCF52B), this protein is Large ribosomal subunit protein uL14.